A 235-amino-acid polypeptide reads, in one-letter code: Large ribosomal subunit protein uL1 (235 aa).

Belongs to the universal ribosomal protein uL1 family. Part of the 50S ribosomal subunit.

In terms of biological role, binds directly to 23S rRNA. The L1 stalk is quite mobile in the ribosome, and is involved in E site tRNA release. Protein L1 is also a translational repressor protein, it controls the translation of the L11 operon by binding to its mRNA. The polypeptide is Large ribosomal subunit protein uL1 (Mycolicibacterium vanbaalenii (strain DSM 7251 / JCM 13017 / BCRC 16820 / KCTC 9966 / NRRL B-24157 / PYR-1) (Mycobacterium vanbaalenii)).